Reading from the N-terminus, the 342-residue chain is Phenylalanine--tRNA ligase alpha subunit (342 aa).

Glu-260 provides a ligand contact to Mg(2+).

This sequence belongs to the class-II aminoacyl-tRNA synthetase family. Phe-tRNA synthetase alpha subunit type 1 subfamily. In terms of assembly, tetramer of two alpha and two beta subunits. Requires Mg(2+) as cofactor.

The protein resides in the cytoplasm. The enzyme catalyses tRNA(Phe) + L-phenylalanine + ATP = L-phenylalanyl-tRNA(Phe) + AMP + diphosphate + H(+). The polypeptide is Phenylalanine--tRNA ligase alpha subunit (Nocardia farcinica (strain IFM 10152)).